The following is a 175-amino-acid chain: Co-chaperone protein daf-41 (175 aa).

One can recognise a CS domain in the interval 2–89 (AKQPTVLWAQ…KTPAWWPRLL (88 aa)). Residues 109–175 (DEDDEAEDAG…EEEGKNGTRA (67 aa)) form a disordered region. Positions 148-168 (GLEDDEEDDDMPDLEDNEEEE) are enriched in acidic residues.

The protein belongs to the p23/wos2 family. Expressed in anterior and posterior neurons including ASE, AWC, ASI and ADL amphids and phasmid sensory neurons, peripheral neurons and ventral cord motorneurons. Additionally expressed in body wall muscle, pharynx, vulva, germ cells and intestine.

In terms of biological role, co-chaperone for hsp90/daf-21. Involved in regulation of longevity, larval entry and exit from the dauer stage of development and response to environmental cues, such as oxidative stress, in a temperature-dependent manner. Role in daf-16 and hsf-1 inhibition at elevated temperatures. The protein is Co-chaperone protein daf-41 of Caenorhabditis elegans.